Reading from the N-terminus, the 431-residue chain is Venom metalloproteinase 1 (431 aa).

Residues 1–22 (MDLFILTRFILFLSFFMKSIHC) form the signal peptide. N-linked (GlcNAc...) asparagine glycans are attached at residues N64, N113, N148, and N187. The 201-residue stretch at 228-428 (DLLMKTSRRL…TSAACLKDTY (201 aa)) folds into the Peptidase M12B domain. Cystine bridges form between C340–C423 and C379–C407. Position 363 (H363) interacts with Zn(2+). Residue E364 is part of the active site. Zn(2+) contacts are provided by H367 and H373. The N-linked (GlcNAc...) asparagine glycan is linked to N414.

It in the C-terminal section; belongs to the venom metalloproteinase (M12B) family. Monomer. It depends on Zn(2+) as a cofactor. Expressed by the venom gland.

The protein resides in the secreted. The gelatinase activity is inhibited by EDTA. In terms of biological role, the recombinant protein has gelatinase activity. In vivo, injection of this recombinant into fifth instar L.oleracea (host) larvae results in partial insect mortality associated with the molt to sixth instar, with surviving insects showing retarded development and growth. The polypeptide is Venom metalloproteinase 1 (Eulophus pennicornis (Parasitoid wasp)).